Reading from the N-terminus, the 402-residue chain is Bacillibactin exporter (402 aa).

11 helical membrane passes run 4 to 24 (IIALSSVPLVMTLGNSMLIPV), 39 to 59 (VSLIITVYSVVAIICIPIAGY), 69 to 89 (ILLPCLLIAGLGGAVAAFAST), 104 to 124 (LQGIGSAGAAPIVMPFIGDLF), 162 to 182 (FVPFWFIPFFCLISFLLVLFL), 212 to 232 (WLYTVFIIGCVIMFLLFGVLF), 247 to 267 (VAKGGLLAIPLLFLSTSSFIA), 278 to 298 (MKFCVVTGMILLTLSFIALWW), 302 to 322 (FYFLFVFLSFGGIGIGMALPA), 342 to 362 (FYNSMRFIGVALGPPVFAALM), and 368 to 388 (IIFILSAFCSIVSLFLVLFTV).

This sequence belongs to the major facilitator superfamily.

It is found in the cell membrane. Involved in secretion of bacillibactin. This chain is Bacillibactin exporter (ymfD), found in Bacillus subtilis (strain 168).